Reading from the N-terminus, the 102-residue chain is Large ribosomal subunit protein bL21 (102 aa).

This sequence belongs to the bacterial ribosomal protein bL21 family. Part of the 50S ribosomal subunit. Contacts protein L20.

This protein binds to 23S rRNA in the presence of protein L20. This chain is Large ribosomal subunit protein bL21, found in Staphylococcus haemolyticus (strain JCSC1435).